The sequence spans 178 residues: Acireductone dioxygenase 1 (178 aa).

The Fe(2+) site is built by His84, His86, Glu90, and His130. Ni(2+) contacts are provided by His84, His86, Glu90, and His130.

It belongs to the acireductone dioxygenase (ARD) family. It depends on Fe(2+) as a cofactor. Requires Ni(2+) as cofactor.

It localises to the cytoplasm. The protein localises to the nucleus. The enzyme catalyses 1,2-dihydroxy-5-(methylsulfanyl)pent-1-en-3-one + O2 = 4-methylsulfanyl-2-oxobutanoate + formate + 2 H(+). It catalyses the reaction 1,2-dihydroxy-5-(methylsulfanyl)pent-1-en-3-one + O2 = 3-(methylsulfanyl)propanoate + CO + formate + 2 H(+). It functions in the pathway amino-acid biosynthesis; L-methionine biosynthesis via salvage pathway; L-methionine from S-methyl-5-thio-alpha-D-ribose 1-phosphate: step 5/6. Functionally, catalyzes 2 different reactions between oxygen and the acireductone 1,2-dihydroxy-3-keto-5-methylthiopentene (DHK-MTPene) depending upon the metal bound in the active site. Fe-containing acireductone dioxygenase (Fe-ARD) produces formate and 2-keto-4-methylthiobutyrate (KMTB), the alpha-ketoacid precursor of methionine in the methionine recycle pathway. Ni-containing acireductone dioxygenase (Ni-ARD) produces methylthiopropionate, carbon monoxide and formate, and does not lie on the methionine recycle pathway. This is Acireductone dioxygenase 1 from Coprinopsis cinerea (strain Okayama-7 / 130 / ATCC MYA-4618 / FGSC 9003) (Inky cap fungus).